Consider the following 304-residue polypeptide: Recombination-associated protein RdgC (304 aa).

The protein belongs to the RdgC family.

The protein resides in the cytoplasm. It is found in the nucleoid. May be involved in recombination. The polypeptide is Recombination-associated protein RdgC (Shewanella baltica (strain OS195)).